The chain runs to 393 residues: NAD(P)H-quinone oxidoreductase subunit H, chloroplastic (393 aa).

This sequence belongs to the complex I 49 kDa subunit family. In terms of assembly, NDH is composed of at least 16 different subunits, 5 of which are encoded in the nucleus.

It is found in the plastid. It localises to the chloroplast thylakoid membrane. The catalysed reaction is a plastoquinone + NADH + (n+1) H(+)(in) = a plastoquinol + NAD(+) + n H(+)(out). It carries out the reaction a plastoquinone + NADPH + (n+1) H(+)(in) = a plastoquinol + NADP(+) + n H(+)(out). In terms of biological role, NDH shuttles electrons from NAD(P)H:plastoquinone, via FMN and iron-sulfur (Fe-S) centers, to quinones in the photosynthetic chain and possibly in a chloroplast respiratory chain. The immediate electron acceptor for the enzyme in this species is believed to be plastoquinone. Couples the redox reaction to proton translocation, and thus conserves the redox energy in a proton gradient. The polypeptide is NAD(P)H-quinone oxidoreductase subunit H, chloroplastic (Cicer arietinum (Chickpea)).